The following is a 222-amino-acid chain: Eukaryotic translation initiation factor 3 subunit K (222 aa).

In terms of domain architecture, PCI spans 46-208 (YDLEANLAVL…KIKTKNITEK (163 aa)).

It belongs to the eIF-3 subunit K family. As to quaternary structure, component of the eukaryotic translation initiation factor 3 (eIF-3) complex. The eIF-3 complex interacts with pix.

It is found in the cytoplasm. In terms of biological role, component of the eukaryotic translation initiation factor 3 (eIF-3) complex, which is involved in protein synthesis of a specialized repertoire of mRNAs and, together with other initiation factors, stimulates binding of mRNA and methionyl-tRNAi to the 40S ribosome. The eIF-3 complex specifically targets and initiates translation of a subset of mRNAs involved in cell proliferation. This is Eukaryotic translation initiation factor 3 subunit K from Drosophila grimshawi (Hawaiian fruit fly).